A 270-amino-acid chain; its full sequence is Putative F-box protein At3g24700 (270 aa).

The region spanning 1-45 (MLTDLPLDLESEILSRVPATSLQRLKTTCKRWYALFRDPRFVKKN) is the F-box domain.

The sequence is that of Putative F-box protein At3g24700 from Arabidopsis thaliana (Mouse-ear cress).